The chain runs to 123 residues: Ragulator complex protein LAMTOR3-A (123 aa).

It belongs to the LAMTOR3 family. Part of the Ragulator complex composed of lamtor1, lamtor2, lamtor3, lamtor4 and lamtor5. The Ragulator complex interacts with slc38a9; the probable amino acid sensor. Component of the lysosomal folliculin complex (LFC).

The protein resides in the late endosome membrane. Its function is as follows. As part of the Ragulator complex it is involved in amino acid sensing and activation of mTORC1, a signaling complex promoting cell growth in response to growth factors, energy levels, and amino acids. Activated by amino acids through a mechanism involving the lysosomal V-ATPase, the Ragulator plays a dual role for the small GTPases Rag (RagA/RRAGA, RagB/RRAGB, RagC/RRAGC and/or RagD/RRAGD): it (1) acts as a guanine nucleotide exchange factor (GEF), activating the small GTPases Rag and (2) mediates recruitment of Rag GTPases to the lysosome membrane. Activated Ragulator and Rag GTPases function as a scaffold recruiting mTORC1 to lysosomes where it is in turn activated. This Xenopus laevis (African clawed frog) protein is Ragulator complex protein LAMTOR3-A (lamtor3-a).